A 287-amino-acid polypeptide reads, in one-letter code: SPX domain-containing protein 2 (287 aa).

The SPX domain maps to 1-162 (MKFGKSLSNQ…GALIRLPFIQ (162 aa)). Positions 36–50 (EPRSVENRPNKRSRS) are enriched in basic and acidic residues. Disordered regions lie at residues 36–61 (EPRS…DPTV) and 194–213 (KSRN…VKTG).

The protein resides in the nucleus. Functionally, may inhibit PHR1 DNA-binding activity in a Pi-dependent manner. The sequence is that of SPX domain-containing protein 2 from Arabidopsis thaliana (Mouse-ear cress).